Here is a 211-residue protein sequence, read N- to C-terminus: uncharacterized protein (211 aa).

This is an uncharacterized protein from Lactuca sativa (Garden lettuce).